Reading from the N-terminus, the 264-residue chain is Nicotinamide N-methyltransferase (264 aa).

Residue arginine 18 is modified to Citrulline; alternate. Residues tyrosine 20 and tyrosine 25 each contribute to the S-adenosyl-L-methionine site. Position 39 is an N6-acetyllysine (lysine 39). S-adenosyl-L-methionine contacts are provided by glycine 63, tyrosine 69, aspartate 85, and asparagine 90. Arginine 132 carries the post-translational modification Citrulline; alternate. S-adenosyl-L-methionine is bound by residues aspartate 142 to valine 143 and threonine 163. Residue arginine 181 is modified to Citrulline; alternate. Nicotinamide is bound by residues aspartate 197 and serine 213.

Belongs to the class I-like SAM-binding methyltransferase superfamily. NNMT/PNMT/TEMT family. As to quaternary structure, monomer. In terms of processing, deiminated by PADI1 and PADI2. In terms of tissue distribution, predominantly expressed in the liver. A lower expression is seen in the kidney, lung, skeletal muscle, placenta and heart. Not detected in the brain or pancreas.

The protein resides in the cytoplasm. The catalysed reaction is nicotinamide + S-adenosyl-L-methionine = 1-methylnicotinamide + S-adenosyl-L-homocysteine. It participates in cofactor metabolism. Its pathway is amino-acid degradation. With respect to regulation, inactivated by deimination on Arg-132. Functionally, catalyzes the N-methylation of nicotinamide using the universal methyl donor S-adenosyl-L-methionine to form N1-methylnicotinamide and S-adenosyl-L-homocysteine, a predominant nicotinamide/vitamin B3 clearance pathway. Plays a central role in regulating cellular methylation potential, by consuming S-adenosyl-L-methionine and limiting its availability for other methyltransferases. Actively mediates genome-wide epigenetic and transcriptional changes through hypomethylation of repressive chromatin marks, such as H3K27me3. In a developmental context, contributes to low levels of the repressive histone marks that characterize pluripotent embryonic stem cell pre-implantation state. Acts as a metabolic regulator primarily on white adipose tissue energy expenditure as well as hepatic gluconeogenesis and cholesterol biosynthesis. In white adipocytes, regulates polyamine flux by consuming S-adenosyl-L-methionine which provides for propylamine group in polyamine biosynthesis, whereas by consuming nicotinamide controls NAD(+) levels through the salvage pathway. Via its product N1-methylnicotinamide regulates protein acetylation in hepatocytes, by repressing the ubiquitination and increasing the stability of SIRT1 deacetylase. Can also N-methylate other pyridines structurally related to nicotinamide and play a role in xenobiotic detoxification. The protein is Nicotinamide N-methyltransferase of Homo sapiens (Human).